A 617-amino-acid polypeptide reads, in one-letter code: Formin-binding protein 1 (617 aa).

The required for self-association and induction of membrane tubulation stretch occupies residues 1–79; that stretch reads MSWGTELWDQ…CKAFISNLNE (79 aa). An F-BAR domain is found at 1 to 264; that stretch reads MSWGTELWDQ…AAESIDQKND (264 aa). Residues 1 to 335 are interaction with microtubules; that stretch reads MSWGTELWDQ…KKNKLMSLLT (335 aa). 2 positions are modified to N6-acetyllysine: Lys-66 and Lys-110. A coiled-coil region spans residues 67 to 259; that stretch reads YTSCKAFISN…DGIVKAAESI (193 aa). A required for self-association and induction of membrane tubulation region spans residues 251–617; the sequence is GIVKAAESID…VCLDKNAKDS (367 aa). 2 disordered regions span residues 280–315 and 333–366; these read GDIE…KFGG and LLTS…QKEP. Phosphoserine occurs at positions 296 and 299. A compositionally biased stretch (pro residues) spans 338 to 347; the sequence is HQPPPPPPAS. A phosphoserine mark is found at Ser-349 and Ser-359. Residues 398–490 adopt a coiled-coil conformation; the sequence is TPEDFSNLPP…EVEGRLPARS (93 aa). Positions 400-552 are interaction with RND2; that stretch reads EDFSNLPPEQ…FDDEEPLPAI (153 aa). In terms of domain architecture, REM-1 spans 404–481; sequence NLPPEQRRKK…TQKFEAWLAE (78 aa). Positions 486–531 are disordered; that stretch reads LPARSEQARRQSGLYDSQNPPTVNNCAQDRESPDGSYTEEQSQESE. Residues 495–617 are interaction with PDE6G; that stretch reads RQSGLYDSQN…VCLDKNAKDS (123 aa). The residue at position 497 (Ser-497) is a Phosphoserine. The segment covering 499–512 has biased composition (polar residues); sequence LYDSQNPPTVNNCA. Phosphotyrosine is present on Tyr-500. A required for interaction with TNKS region spans residues 514-617; that stretch reads DRESPDGSYT…VCLDKNAKDS (104 aa). The residue at position 521 (Ser-521) is a Phosphoserine. Residues 535-617 form an interaction with DNM1 and DNM3 region; that stretch reads LATDFDDEFD…VCLDKNAKDS (83 aa). The region spanning 550-611 is the SH3 domain; it reads PAIGTCKALY…PTSYVEVCLD (62 aa). An interaction with ARHGAP17, DAAM1, DIAPH1 and DIAPH2 region spans residues 550–617; that stretch reads PAIGTCKALY…VCLDKNAKDS (68 aa). Residues 553-609 are interaction with DNM2 and WASL; the sequence is GTCKALYTFEGQNEGTISVVEGETLYVIEEDKGDGWTRIRRNEDEEGYVPTSYVEVC. The interaction with FASLG stretch occupies residues 553 to 610; it reads GTCKALYTFEGQNEGTISVVEGETLYVIEEDKGDGWTRIRRNEDEEGYVPTSYVEVCL.

It belongs to the FNBP1 family. Interacts specifically with GTP-bound RND2 and CDC42. Interacts with PDE6G and microtubules. Homodimerizes, the dimers can polymerize end-to-end to form filamentous structures. Interacts with AKAP9, ARHGAP17, DAAM1, DIAPH1, DIAPH2, DNM1, DNM2, DNM3, FASLG/FASL, SNX2 and WASL/N-WASP. May interact with TNKS. In terms of tissue distribution, very highly expressed in the epithelial cells of the gastrointestinal tract, respiratory, reproductive and urinary systems. Also highly expressed in brown adipose tissue, cardiomyocytes, enteric ganglia and glucagon producing cells of the pancreas. Expressed in germ cells of the testis and all regions of the brain.

The protein resides in the cytoplasm. The protein localises to the cytoskeleton. Its subcellular location is the cell cortex. It is found in the lysosome. It localises to the cytoplasmic vesicle. The protein resides in the cell membrane. The protein localises to the membrane. Its subcellular location is the clathrin-coated pit. Functionally, may act as a link between RND2 signaling and regulation of the actin cytoskeleton. Required to coordinate membrane tubulation with reorganization of the actin cytoskeleton during the late stage of clathrin-mediated endocytosis. Binds to lipids such as phosphatidylinositol 4,5-bisphosphate and phosphatidylserine and promotes membrane invagination and the formation of tubules. Also enhances actin polymerization via the recruitment of WASL/N-WASP, which in turn activates the Arp2/3 complex. Actin polymerization may promote the fission of membrane tubules to form endocytic vesicles. May be required for the lysosomal retention of FASLG/FASL. The chain is Formin-binding protein 1 (FNBP1) from Homo sapiens (Human).